The chain runs to 1299 residues: Outer capsid protein VP1 (1299 aa).

It belongs to the aquareoviridae outer capsid VP1 protein family.

The protein localises to the virion. The enzyme catalyses a 5'-end diphospho-ribonucleoside in mRNA + GTP + H(+) = a 5'-end (5'-triphosphoguanosine)-ribonucleoside in mRNA + diphosphate. The catalysed reaction is a 5'-end (5'-triphosphoguanosine)-ribonucleoside in mRNA + S-adenosyl-L-methionine = a 5'-end (N(7)-methyl 5'-triphosphoguanosine)-ribonucleoside in mRNA + S-adenosyl-L-homocysteine. Its function is as follows. Outer capsid protein involved in mRNA capping. Catalyzes the last 3 enzymatic activities for formation of the 5' cap structure on the viral plus-strand transcripts, namely the RNA guanylyltransferase, RNA-7N- and RNA-2'O-methyltransferase activities. The sequence is that of Outer capsid protein VP1 (S1) from Aquareovirus C (isolate Golden shiner/USA/GSRV/1977) (AQRV-C).